The chain runs to 537 residues: CTP synthase (537 aa).

An amidoligase domain region spans residues 1 to 265 (MVHFIFVTGG…DNKVLKFFNI (265 aa)). Ser13 contacts CTP. Residue Ser13 coordinates UTP. Residues 14 to 19 (SLGKGL) and Asp71 each bind ATP. Residues Asp71 and Glu139 each contribute to the Mg(2+) site. Residues 146–148 (DIE) and Lys222 each bind CTP. UTP is bound at residue Lys222. Positions 290-536 (RIAIIAKYHK…IKAAIEYNKC (247 aa)) constitute a Glutamine amidotransferase type-1 domain. Gly352 contributes to the L-glutamine binding site. Residue Cys379 is the Nucleophile; for glutamine hydrolysis of the active site. L-glutamine is bound by residues 380–383 (FGMQ), Glu403, and Arg464. Catalysis depends on residues His509 and Glu511.

The protein belongs to the CTP synthase family. As to quaternary structure, homotetramer.

It catalyses the reaction UTP + L-glutamine + ATP + H2O = CTP + L-glutamate + ADP + phosphate + 2 H(+). It carries out the reaction L-glutamine + H2O = L-glutamate + NH4(+). The catalysed reaction is UTP + NH4(+) + ATP = CTP + ADP + phosphate + 2 H(+). Its pathway is pyrimidine metabolism; CTP biosynthesis via de novo pathway; CTP from UDP: step 2/2. Allosterically activated by GTP, when glutamine is the substrate; GTP has no effect on the reaction when ammonia is the substrate. The allosteric effector GTP functions by stabilizing the protein conformation that binds the tetrahedral intermediate(s) formed during glutamine hydrolysis. Inhibited by the product CTP, via allosteric rather than competitive inhibition. Functionally, catalyzes the ATP-dependent amination of UTP to CTP with either L-glutamine or ammonia as the source of nitrogen. Regulates intracellular CTP levels through interactions with the four ribonucleotide triphosphates. This Rickettsia rickettsii (strain Iowa) protein is CTP synthase.